Consider the following 183-residue polypeptide: Mitochondrial inner membrane protease subunit 2 (183 aa).

The helical transmembrane segment at 13-35 (AFVSGFFVAVPVTVTVLDRLAYV) threads the bilayer. Residues Ser-42 and Lys-90 contribute to the active site. The tract at residues 161–183 (SVPPDRRPLLNWDRAAEDKYDDD) is disordered. A compositionally biased stretch (basic and acidic residues) spans 164-183 (PDRRPLLNWDRAAEDKYDDD).

Belongs to the peptidase S26 family. IMP2 subfamily. As to quaternary structure, heterodimer of 2 subunits, IMMPL1 and IMMPL2.

It localises to the mitochondrion inner membrane. Functionally, catalyzes the removal of transit peptides required for the targeting of proteins from the mitochondrial matrix, across the inner membrane, into the inter-membrane space. This Danio rerio (Zebrafish) protein is Mitochondrial inner membrane protease subunit 2 (immp2l).